The chain runs to 149 residues: L-alanine exporter AlaE (149 aa).

4 consecutive transmembrane segments (helical) span residues 16–36 (FAMV…LSGM), 46–66 (LVAI…RDAI), 85–105 (VLAY…TVGA), and 112–132 (AAVS…GYFL).

The protein belongs to the AlaE exporter family.

It localises to the cell inner membrane. In terms of biological role, exports L-alanine. The sequence is that of L-alanine exporter AlaE from Citrobacter koseri (strain ATCC BAA-895 / CDC 4225-83 / SGSC4696).